We begin with the raw amino-acid sequence, 382 residues long: Mannitol-1-phosphate 5-dehydrogenase (382 aa).

An NAD(+)-binding site is contributed by Ala3–Gly14. Lys269 carries the N6-acetyllysine modification.

Belongs to the mannitol dehydrogenase family.

The enzyme catalyses D-mannitol 1-phosphate + NAD(+) = beta-D-fructose 6-phosphate + NADH + H(+). This chain is Mannitol-1-phosphate 5-dehydrogenase, found in Escherichia coli O9:H4 (strain HS).